The chain runs to 443 residues: Tol-Pal system protein TolB (443 aa).

The signal sequence occupies residues 1 to 31 (MTRLAKGKWRSTLGAMMALAVMVAAIPQARA). A compositionally biased stretch (polar residues) spans 423–432 (NERQISTPTE). The interval 423 to 443 (NERQISTPTEASDPAWSPLLP) is disordered.

The protein belongs to the TolB family. As to quaternary structure, the Tol-Pal system is composed of five core proteins: the inner membrane proteins TolA, TolQ and TolR, the periplasmic protein TolB and the outer membrane protein Pal. They form a network linking the inner and outer membranes and the peptidoglycan layer.

It localises to the periplasm. Its function is as follows. Part of the Tol-Pal system, which plays a role in outer membrane invagination during cell division and is important for maintaining outer membrane integrity. The chain is Tol-Pal system protein TolB from Rhodospirillum rubrum (strain ATCC 11170 / ATH 1.1.1 / DSM 467 / LMG 4362 / NCIMB 8255 / S1).